Reading from the N-terminus, the 539-residue chain is Phenylacetyl-CoA ligase epaB (539 aa).

188–199 (RLFSSGTTGLPK) provides a ligand contact to AMP. Residues 449–525 (EVEGVLRNHP…DAIPRNASGK (77 aa)) are AMP-binding.

The protein belongs to the ATP-dependent AMP-binding enzyme family.

It functions in the pathway secondary metabolite biosynthesis. Phenylacetyl-CoA ligase; part of the gene cluster that mediates the biosynthesis of nigerpyrone and its derivatives carbonarone A and pestalamide A. The biosynthesis pathway begins with the polyketide assembly by epaA to form phenylacetyl triketide precursor from successive condensation of two malonyl-CoA, presumably with one phenylacetyl-CoA starter unit produced by the phenylacetyl-CoA ligase epaB. For the nigerpyrone biosynthesis, the reactive polyketide chain is released as an aldehyde through the R-domain. A nonenzymatic cyclization and dehydration may create nigerpyrone. For the biosynthesis of carbonarone A and pestalamide A, an extra methyl group is added through the C-methyltransferase domain. Several further steps involving the dehydrogenase orf1, the cytochrome P450 monooxygenase orf2 and the FAD-dependent monooxygenase orf3 are required to form a carbonarone A precursor which is converted to carbonarone A via cyclization. The O-acetyltransferase epaC could catalyze the transfer of 2-methylsuccinyl-CoA, a common intermediate in the ethylmalonyl-CoA pathway, to generate the final product pestalamide A. This chain is Phenylacetyl-CoA ligase epaB, found in Aspergillus niger (strain ATCC MYA-4892 / CBS 513.88 / FGSC A1513).